A 365-amino-acid polypeptide reads, in one-letter code: DNA replication and repair protein RecF (365 aa).

30–37 (GLNAQGKT) lines the ATP pocket.

The protein belongs to the RecF family.

The protein resides in the cytoplasm. Functionally, the RecF protein is involved in DNA metabolism; it is required for DNA replication and normal SOS inducibility. RecF binds preferentially to single-stranded, linear DNA. It also seems to bind ATP. This Chlamydia trachomatis serovar A (strain ATCC VR-571B / DSM 19440 / HAR-13) protein is DNA replication and repair protein RecF.